Consider the following 59-residue polypeptide: UPF0181 protein YoaH (59 aa).

This sequence belongs to the UPF0181 family.

This chain is UPF0181 protein YoaH, found in Escherichia coli O127:H6 (strain E2348/69 / EPEC).